We begin with the raw amino-acid sequence, 327 residues long: tRNA uridine(34) hydroxylase (327 aa).

Residues 123-217 (SDPEVLVVDT…YLEEVPQEQS (95 aa)) enclose the Rhodanese domain. The Cysteine persulfide intermediate role is filled by cysteine 177.

Belongs to the TrhO family.

It carries out the reaction uridine(34) in tRNA + AH2 + O2 = 5-hydroxyuridine(34) in tRNA + A + H2O. Functionally, catalyzes oxygen-dependent 5-hydroxyuridine (ho5U) modification at position 34 in tRNAs. The sequence is that of tRNA uridine(34) hydroxylase from Vibrio cholerae serotype O1 (strain ATCC 39315 / El Tor Inaba N16961).